The chain runs to 174 residues: Shikimate kinase (174 aa).

15–20 (GTGKST) lines the ATP pocket. S19 serves as a coordination point for Mg(2+). Substrate is bound by residues D37, R61, and G82. R120 contacts ATP. R138 contacts substrate.

The protein belongs to the shikimate kinase family. In terms of assembly, monomer. It depends on Mg(2+) as a cofactor.

It localises to the cytoplasm. It carries out the reaction shikimate + ATP = 3-phosphoshikimate + ADP + H(+). It participates in metabolic intermediate biosynthesis; chorismate biosynthesis; chorismate from D-erythrose 4-phosphate and phosphoenolpyruvate: step 5/7. Functionally, catalyzes the specific phosphorylation of the 3-hydroxyl group of shikimic acid using ATP as a cosubstrate. The chain is Shikimate kinase from Staphylococcus aureus (strain Mu3 / ATCC 700698).